A 657-amino-acid chain; its full sequence is uncharacterized protein (657 aa).

The N-terminal stretch at 1–17 is a signal peptide; it reads MACVLACVAVLIGAASA.

This is an uncharacterized protein from Orgyia pseudotsugata (Douglas-fir tussock moth).